The following is a 938-amino-acid chain: Isoleucine--tRNA ligase (938 aa).

Positions Pro-58–His-68 match the 'HIGH' region motif. Glu-561 contacts L-isoleucyl-5'-AMP. A 'KMSKS' region motif is present at residues Lys-602–Ser-606. Lys-605 provides a ligand contact to ATP. Zn(2+)-binding residues include Cys-901, Cys-904, Cys-921, and Cys-924.

The protein belongs to the class-I aminoacyl-tRNA synthetase family. IleS type 1 subfamily. In terms of assembly, monomer. Zn(2+) serves as cofactor.

It is found in the cytoplasm. The enzyme catalyses tRNA(Ile) + L-isoleucine + ATP = L-isoleucyl-tRNA(Ile) + AMP + diphosphate. In terms of biological role, catalyzes the attachment of isoleucine to tRNA(Ile). As IleRS can inadvertently accommodate and process structurally similar amino acids such as valine, to avoid such errors it has two additional distinct tRNA(Ile)-dependent editing activities. One activity is designated as 'pretransfer' editing and involves the hydrolysis of activated Val-AMP. The other activity is designated 'posttransfer' editing and involves deacylation of mischarged Val-tRNA(Ile). The protein is Isoleucine--tRNA ligase of Yersinia enterocolitica serotype O:8 / biotype 1B (strain NCTC 13174 / 8081).